The primary structure comprises 213 residues: Probable thymidylate kinase 2 (213 aa).

Position 10-17 (10-17 (GIDGSGKS)) interacts with ATP.

Belongs to the thymidylate kinase family.

The enzyme catalyses dTMP + ATP = dTDP + ADP. The sequence is that of Probable thymidylate kinase 2 (tmk2) from Saccharolobus solfataricus (strain ATCC 35092 / DSM 1617 / JCM 11322 / P2) (Sulfolobus solfataricus).